The following is an 88-amino-acid chain: Small ribosomal subunit protein bS20 (88 aa).

A disordered region spans residues 1–23 (MANSPQAKKRARQNDKARAHNAS).

Belongs to the bacterial ribosomal protein bS20 family.

Functionally, binds directly to 16S ribosomal RNA. This chain is Small ribosomal subunit protein bS20, found in Saccharophagus degradans (strain 2-40 / ATCC 43961 / DSM 17024).